Consider the following 348-residue polypeptide: Phospho-2-dehydro-3-deoxyheptonate aldolase, Trp-sensitive (348 aa).

It belongs to the class-I DAHP synthase family.

The catalysed reaction is D-erythrose 4-phosphate + phosphoenolpyruvate + H2O = 7-phospho-2-dehydro-3-deoxy-D-arabino-heptonate + phosphate. It functions in the pathway metabolic intermediate biosynthesis; chorismate biosynthesis; chorismate from D-erythrose 4-phosphate and phosphoenolpyruvate: step 1/7. Functionally, stereospecific condensation of phosphoenolpyruvate (PEP) and D-erythrose-4-phosphate (E4P) giving rise to 3-deoxy-D-arabino-heptulosonate-7-phosphate (DAHP). This is Phospho-2-dehydro-3-deoxyheptonate aldolase, Trp-sensitive (aroH) from Salmonella typhimurium (strain LT2 / SGSC1412 / ATCC 700720).